Reading from the N-terminus, the 41-residue chain is Large ribosomal subunit protein bL36 (41 aa).

This sequence belongs to the bacterial ribosomal protein bL36 family.

In Phenylobacterium zucineum (strain HLK1), this protein is Large ribosomal subunit protein bL36.